The following is a 353-amino-acid chain: Holliday junction branch migration complex subunit RuvB (353 aa).

The tract at residues Ala4–Tyr185 is large ATPase domain (RuvB-L). Residues Ile24, Arg25, Gly66, Lys69, Thr70, Thr71, Glu132 to Phe134, Arg175, Tyr185, and Arg222 each bind ATP. Thr70 is a binding site for Mg(2+). The segment at Asn186–Asp256 is small ATPAse domain (RuvB-S). The tract at residues Glu259–Leu353 is head domain (RuvB-H). DNA-binding residues include Arg295, Arg314, and Arg319.

This sequence belongs to the RuvB family. Homohexamer. Forms an RuvA(8)-RuvB(12)-Holliday junction (HJ) complex. HJ DNA is sandwiched between 2 RuvA tetramers; dsDNA enters through RuvA and exits via RuvB. An RuvB hexamer assembles on each DNA strand where it exits the tetramer. Each RuvB hexamer is contacted by two RuvA subunits (via domain III) on 2 adjacent RuvB subunits; this complex drives branch migration. In the full resolvosome a probable DNA-RuvA(4)-RuvB(12)-RuvC(2) complex forms which resolves the HJ.

Its subcellular location is the cytoplasm. The enzyme catalyses ATP + H2O = ADP + phosphate + H(+). Functionally, the RuvA-RuvB-RuvC complex processes Holliday junction (HJ) DNA during genetic recombination and DNA repair, while the RuvA-RuvB complex plays an important role in the rescue of blocked DNA replication forks via replication fork reversal (RFR). RuvA specifically binds to HJ cruciform DNA, conferring on it an open structure. The RuvB hexamer acts as an ATP-dependent pump, pulling dsDNA into and through the RuvAB complex. RuvB forms 2 homohexamers on either side of HJ DNA bound by 1 or 2 RuvA tetramers; 4 subunits per hexamer contact DNA at a time. Coordinated motions by a converter formed by DNA-disengaged RuvB subunits stimulates ATP hydrolysis and nucleotide exchange. Immobilization of the converter enables RuvB to convert the ATP-contained energy into a lever motion, pulling 2 nucleotides of DNA out of the RuvA tetramer per ATP hydrolyzed, thus driving DNA branch migration. The RuvB motors rotate together with the DNA substrate, which together with the progressing nucleotide cycle form the mechanistic basis for DNA recombination by continuous HJ branch migration. Branch migration allows RuvC to scan DNA until it finds its consensus sequence, where it cleaves and resolves cruciform DNA. This is Holliday junction branch migration complex subunit RuvB from Pseudomonas syringae pv. syringae (strain B728a).